Reading from the N-terminus, the 320-residue chain is Aminoacyl tRNA synthase complex-interacting multifunctional protein 2 (320 aa).

The residue at position 36 (serine 36) is a Phosphoserine. An interaction with PRKN region spans residues 82–162 (TPDADLDVTN…HTHSAVRSVP (81 aa)). An interaction with TP53 region spans residues 162-225 (PANLLQCFGE…FLFSLFGQKQ (64 aa)). Residues 220–317 (LFGQKQDAVN…NLAPFHTALK (98 aa)) enclose the GST C-terminal domain.

Part of the multisynthetase complex (MSC), a multisubunit complex that groups tRNA ligases for Arg (RARS1), Asp (DARS1), Gln (QARS1), Ile (IARS1), Leu (LARS1), Lys (KARS1), Met (MARS1) the bifunctional ligase for Glu and Pro (EPRS1) and the auxiliary subunits AIMP1/p43, AIMP2/p38 and EEF1E1/p18. Interacts (via N-terminus) with KARS1. Interacts with EPRS1. Forms a linear complex that contains MARS1, EEF1E1, EPRS1 and AIMP2 that is at the core of the multisubunit complex. Binds FUBP1 (via C-terminus). Interacts in both its unphosphorylated and phosphorylated forms with p53/TP53 (via N-terminus) in the nucleus following UV irradiation. Interacts (via N-terminus) with PRKN/parkin (via first RING-type domain). Interacts with TARS3. Phosphorylated on serine residues in response to UV irradiation. In terms of processing, ubiquitinated by PRKN, leading to its degradation by the proteasome.

The protein resides in the cytoplasm. It is found in the cytosol. Its subcellular location is the nucleus. In terms of biological role, required for assembly and stability of the aminoacyl-tRNA synthase complex. Mediates ubiquitination and degradation of FUBP1, a transcriptional activator of MYC, leading to MYC down-regulation which is required for aveolar type II cell differentiation. Blocks MDM2-mediated ubiquitination and degradation of p53/TP53. Functions as a proapoptotic factor. The sequence is that of Aminoacyl tRNA synthase complex-interacting multifunctional protein 2 (AIMP2) from Bos taurus (Bovine).